Here is a 423-residue protein sequence, read N- to C-terminus: GTPase ERA-like, chloroplastic (423 aa).

Residues 1-60 constitute a chloroplast transit peptide; sequence MELGLALRLVAPPPRLPCRALQPPPMPCFSPCAARRSRIRSSRLERRVGVVVSGGSMASL. Residues 124-294 enclose the Era-type G domain; that stretch reads RSGYVAVLGK…KEWILSKLPL (171 aa). The interval 132 to 139 is G1; that stretch reads GKPNVGKS. 132-139 is a binding site for GTP; sequence GKPNVGKS. A G2 region spans residues 158–162; it reads QTTRH. The G3 stretch occupies residues 179-182; that stretch reads DTPG. GTP is bound by residues 179–183 and 244–247; these read DTPGV and NKKD. Positions 244–247 are G4; sequence NKKD. Positions 273–275 are G5; it reads ISA. The 78-residue stretch at 325 to 402 folds into the KH type-2 domain; it reads YRQEIPYACQ…YLEIMVKVKE (78 aa).

This sequence belongs to the TRAFAC class TrmE-Era-EngA-EngB-Septin-like GTPase superfamily. Era GTPase family.

The protein resides in the plastid. Its subcellular location is the chloroplast stroma. It localises to the chloroplast nucleoid. In terms of biological role, nuclear genome-encoded probable GTPase involved in ribosome biogenesis in chloroplasts. Plays a role in 16S rRNA maturation in plastids and may contribute to the assembly of the small (30S) ribosomal subunit. The polypeptide is GTPase ERA-like, chloroplastic (Oryza sativa subsp. japonica (Rice)).